A 414-amino-acid polypeptide reads, in one-letter code: Carboxyl-terminal-processing protease (414 aa).

A signal peptide spans 1–29; sequence MLRKRLQAGLCSLLLVLVLVFGPMERAIA. Residues 100–184 form the PDZ domain; the sequence is YRSLKVSTSG…STVSLTVKSP (85 aa). Residues serine 310, aspartate 321, and lysine 335 each act as charge relay system in the active site.

It belongs to the peptidase S41A family.

Its subcellular location is the cellular thylakoid lumen. The enzyme catalyses The enzyme shows specific recognition of a C-terminal tripeptide, Xaa-Yaa-Zaa, in which Xaa is preferably Ala or Leu, Yaa is preferably Ala or Tyr, and Zaa is preferably Ala, but then cleaves at a variable distance from the C-terminus. A typical cleavage is -Ala-Ala-|-Arg-Ala-Ala-Lys-Glu-Asn-Tyr-Ala-Leu-Ala-Ala.. Its function is as follows. Cleavage of the 16 C-terminal residues from the D1 precursor of photosystem II (PSII). This proteolytic processing is necessary to allow the light-driven assembly of the oxygen-evolving cluster (a tetranuclear manganese), which is responsible for photosynthetic water oxidation. In Picosynechococcus sp. (strain ATCC 27264 / PCC 7002 / PR-6) (Agmenellum quadruplicatum), this protein is Carboxyl-terminal-processing protease (ctpA).